The following is an 890-amino-acid chain: Translation initiation factor IF-2 (890 aa).

Residues 45 to 304 form a disordered region; sequence LIDHLNQKNS…LQQGFQKPAQ (260 aa). Polar residues predominate over residues 67-81; that stretch reads STLNIPGTGGKSKSV. Positions 92-217 are enriched in basic and acidic residues; sequence VKRDPQEAER…RMAEENKWTD (126 aa). Residues 252–266 are compositionally biased toward basic residues; sequence GRGRNAKAARPKKGN. Residues 267 to 280 show a composition bias toward basic and acidic residues; the sequence is KHAESKADREEARA. Residues 389–558 enclose the tr-type G domain; the sequence is PRAPVVTIMG…LLQAEVLELK (170 aa). A G1 region spans residues 398-405; that stretch reads GHVDHGKT. 398–405 contacts GTP; the sequence is GHVDHGKT. Residues 423-427 form a G2 region; the sequence is GITQH. Residues 444 to 447 are G3; sequence DTPG. GTP contacts are provided by residues 444–448 and 498–501; these read DTPGH and NKID. Positions 498–501 are G4; that stretch reads NKID. Positions 534–536 are G5; that stretch reads SAK. The residue at position 808 (Lys808) is an N6-acetyllysine.

Belongs to the TRAFAC class translation factor GTPase superfamily. Classic translation factor GTPase family. IF-2 subfamily.

The protein resides in the cytoplasm. Its function is as follows. One of the essential components for the initiation of protein synthesis. Protects formylmethionyl-tRNA from spontaneous hydrolysis and promotes its binding to the 30S ribosomal subunits. Also involved in the hydrolysis of GTP during the formation of the 70S ribosomal complex. The polypeptide is Translation initiation factor IF-2 (Escherichia coli (strain 55989 / EAEC)).